A 108-amino-acid polypeptide reads, in one-letter code: uncharacterized protein (108 aa).

A helical transmembrane segment spans residues 7–27; that stretch reads FIPMLLVANAAPYFFYPIFML.

This sequence to N.crassa NCU05373.1.

The protein resides in the membrane. This is an uncharacterized protein from Schizosaccharomyces pombe (strain 972 / ATCC 24843) (Fission yeast).